Consider the following 132-residue polypeptide: ATP synthase epsilon chain (132 aa).

This sequence belongs to the ATPase epsilon chain family. F-type ATPases have 2 components, CF(1) - the catalytic core - and CF(0) - the membrane proton channel. CF(1) has five subunits: alpha(3), beta(3), gamma(1), delta(1), epsilon(1). CF(0) has three main subunits: a, b and c.

Its subcellular location is the cell membrane. Functionally, produces ATP from ADP in the presence of a proton gradient across the membrane. In Bacillus velezensis (strain DSM 23117 / BGSC 10A6 / LMG 26770 / FZB42) (Bacillus amyloliquefaciens subsp. plantarum), this protein is ATP synthase epsilon chain.